The sequence spans 168 residues: Peptide deformylase 2 (168 aa).

2 residues coordinate Fe cation: cysteine 91 and histidine 133. Glutamate 134 is an active-site residue. Residue histidine 137 coordinates Fe cation.

The protein belongs to the polypeptide deformylase family. It depends on Fe(2+) as a cofactor.

It carries out the reaction N-terminal N-formyl-L-methionyl-[peptide] + H2O = N-terminal L-methionyl-[peptide] + formate. Removes the formyl group from the N-terminal Met of newly synthesized proteins. Requires at least a dipeptide for an efficient rate of reaction. N-terminal L-methionine is a prerequisite for activity but the enzyme has broad specificity at other positions. This is Peptide deformylase 2 from Vibrio cholerae serotype O1 (strain ATCC 39315 / El Tor Inaba N16961).